Reading from the N-terminus, the 312-residue chain is Malate dehydrogenase (312 aa).

NAD(+)-binding positions include 7-13 (GAAGGIG) and Asp-34. Substrate contacts are provided by Arg-81 and Arg-87. NAD(+)-binding positions include Asn-94 and 117–119 (ITN). Residues Asn-119 and Arg-153 each contribute to the substrate site. The active-site Proton acceptor is the His-177. Residue Met-227 participates in NAD(+) binding.

It belongs to the LDH/MDH superfamily. MDH type 1 family. Homodimer.

The catalysed reaction is (S)-malate + NAD(+) = oxaloacetate + NADH + H(+). Catalyzes the reversible oxidation of malate to oxaloacetate. The chain is Malate dehydrogenase (mdh) from Moritella sp. (strain 5710).